Reading from the N-terminus, the 122-residue chain is Large ribosomal subunit protein uL14 (122 aa).

It belongs to the universal ribosomal protein uL14 family. In terms of assembly, part of the 50S ribosomal subunit. Forms a cluster with proteins L3 and L19. In the 70S ribosome, L14 and L19 interact and together make contacts with the 16S rRNA in bridges B5 and B8.

In terms of biological role, binds to 23S rRNA. Forms part of two intersubunit bridges in the 70S ribosome. This Chlamydia trachomatis serovar A (strain ATCC VR-571B / DSM 19440 / HAR-13) protein is Large ribosomal subunit protein uL14.